The following is a 263-amino-acid chain: uncharacterized protein (263 aa).

In terms of domain architecture, ABC transporter spans 12 to 247; it reads LETQNLAIGY…ENLAKIYRTS (236 aa). Position 44–51 (44–51) interacts with ATP; sequence GANGAGKS.

Belongs to the ABC transporter superfamily.

This is an uncharacterized protein from Haemophilus influenzae (strain ATCC 51907 / DSM 11121 / KW20 / Rd).